Reading from the N-terminus, the 842-residue chain is Xyloglucanase Xgh74A (842 aa).

A signal peptide spans 1–32; it reads MVKKFTSKIKAAVFAAVVAATAIFGPAISSQA. Asp70 functions as the Nucleophile in the catalytic mechanism. BNR repeat units follow at residues 134-144, 185-196, 252-262, and 358-368; these read RSTDRGETWEK, WRSTDYGVTWSK, YRSTDGGVTWK, and FRSTDGGATWK. Residue Asp480 is the Proton donor of the active site. BNR repeat units follow at residues 533 to 541, 577 to 586, 616 to 626, 660 to 671, and 708 to 718; these read FSYDGGRNW, VTTDNGNSWK, YISTDGGLTFT, WRSTDGGYTFEK, and FRSDDAGKTWV. The 71-residue stretch at 771–841 folds into the Dockerin domain; sequence DKGLVGDLNG…LLQAIPELPK (71 aa).

The protein belongs to the glycosyl hydrolase 74 family.

Functionally, hydrolyzes the glucosidic bonds of unbranched Glc residues in tamarind seed xyloglucan, producing XXXG, XLXG, XXLG and XLLG. Has low activity on carboxymethylcellulose, lichenan,hydroxyethylcellulose and glucuronoxylan, and no activity on xylan, polygalaturonic acid, wheat arabinoxylan, rhamnogalacturan, curdlan, laminarin, galactomannan, galactan, arabinan and pachyman or amorphous cellulose. The polypeptide is Xyloglucanase Xgh74A (Acetivibrio thermocellus (strain ATCC 27405 / DSM 1237 / JCM 9322 / NBRC 103400 / NCIMB 10682 / NRRL B-4536 / VPI 7372) (Clostridium thermocellum)).